The following is a 140-amino-acid chain: Nucleoside diphosphate kinase (140 aa).

ATP contacts are provided by K11, F59, R87, T93, R104, and N114. Residue H117 is the Pros-phosphohistidine intermediate of the active site.

It belongs to the NDK family. As to quaternary structure, homotetramer. It depends on Mg(2+) as a cofactor.

Its subcellular location is the cytoplasm. The catalysed reaction is a 2'-deoxyribonucleoside 5'-diphosphate + ATP = a 2'-deoxyribonucleoside 5'-triphosphate + ADP. The enzyme catalyses a ribonucleoside 5'-diphosphate + ATP = a ribonucleoside 5'-triphosphate + ADP. In terms of biological role, major role in the synthesis of nucleoside triphosphates other than ATP. The ATP gamma phosphate is transferred to the NDP beta phosphate via a ping-pong mechanism, using a phosphorylated active-site intermediate. The protein is Nucleoside diphosphate kinase of Methylobacterium sp. (strain 4-46).